The chain runs to 103 residues: Large ribosomal subunit protein bL21 (103 aa).

It belongs to the bacterial ribosomal protein bL21 family. Part of the 50S ribosomal subunit. Contacts protein L20.

Functionally, this protein binds to 23S rRNA in the presence of protein L20. The polypeptide is Large ribosomal subunit protein bL21 (Nitrosospira multiformis (strain ATCC 25196 / NCIMB 11849 / C 71)).